The sequence spans 437 residues: uncharacterized protein (437 aa).

Residues S290 and S293 each carry the phosphoserine modification. Phosphothreonine is present on T296. Phosphoserine occurs at positions 418 and 428.

This is an uncharacterized protein from Schizosaccharomyces pombe (strain 972 / ATCC 24843) (Fission yeast).